The sequence spans 453 residues: Protein LOW PSII ACCUMULATION 1, chloroplastic (453 aa).

The transit peptide at 1–92 directs the protein to the chloroplast; it reads MAVATAPSLN…LDLFKRGRVK (92 aa). TPR repeat units follow at residues 75–108 and 112–145; these read AELC…APNP and QAAY…YNLK. The next 2 helical transmembrane spans lie at 202–222 and 238–258; these read FFYF…VPRL and TTGN…LFLW.

In terms of assembly, interacts with psbA, but not with psbD, petB, ALB3, LPA2 or LPA3. Is not a component of the PSII complex.

The protein resides in the plastid. It is found in the chloroplast thylakoid membrane. Its function is as follows. Chaperone required for efficient photosystem II (PSII) assembly. Binds to psbA during de novo biogenesis of PSII. The chain is Protein LOW PSII ACCUMULATION 1, chloroplastic (LPA1) from Arabidopsis thaliana (Mouse-ear cress).